A 241-amino-acid polypeptide reads, in one-letter code: Carboxy-S-adenosyl-L-methionine synthase (241 aa).

Residues Tyr-38, 63 to 65, 88 to 89, 116 to 117, Asn-131, and Arg-198 contribute to the S-adenosyl-L-methionine site; these read GCS, DN, and DI.

It belongs to the class I-like SAM-binding methyltransferase superfamily. Cx-SAM synthase family. Homodimer.

The catalysed reaction is prephenate + S-adenosyl-L-methionine = carboxy-S-adenosyl-L-methionine + 3-phenylpyruvate + H2O. Its function is as follows. Catalyzes the conversion of S-adenosyl-L-methionine (SAM) to carboxy-S-adenosyl-L-methionine (Cx-SAM). The polypeptide is Carboxy-S-adenosyl-L-methionine synthase (Pseudoalteromonas translucida (strain TAC 125)).